A 505-amino-acid chain; its full sequence is RNA-binding region-containing protein 3 (505 aa).

The 76-residue stretch at 15 to 90 (KTLIIRHLPR…RTLVVEFAKD (76 aa)) folds into the RRM 1 domain. Disordered stretches follow at residues 96-123 (ILKD…QPSV), 193-236 (PPMF…EEER), 354-374 (AQVP…SEFI), and 486-505 (ARSA…GRKH). Pro residues predominate over residues 193–214 (PPMFEMPSGPLPPPFPPENPPL). Composition is skewed to acidic residues over residues 221–235 (GSEE…DEEE) and 361–370 (EEQEEDEDIP). The RRM 2 domain maps to 405 to 488 (CRLYVKNVAK…KPLVVQFARS (84 aa)). Residues 491 to 505 (PKQESADPKKGGRKH) are compositionally biased toward basic and acidic residues.

Component of the U11/U12 snRNPs that are part of the U12-type spliceosome.

The protein localises to the nucleus. In terms of biological role, participates in pre-mRNA U12-dependent splicing, performed by the minor spliceosome which removes U12-type introns. U12-type introns comprise less than 1% of all non-coding sequences. This chain is RNA-binding region-containing protein 3, found in Danio rerio (Zebrafish).